The sequence spans 264 residues: Phosphate import ATP-binding protein PstB (264 aa).

The ABC transporter domain occupies 11-250 (LKAEALSVYY…DTTEKIFDSP (240 aa)). An ATP-binding site is contributed by 43-50 (GPSGCGKS).

It belongs to the ABC transporter superfamily. Phosphate importer (TC 3.A.1.7) family. The complex is composed of two ATP-binding proteins (PstB), two transmembrane proteins (PstC and PstA) and a solute-binding protein (PstS).

The protein resides in the cell inner membrane. It carries out the reaction phosphate(out) + ATP + H2O = ADP + 2 phosphate(in) + H(+). Part of the ABC transporter complex PstSACB involved in phosphate import. Responsible for energy coupling to the transport system. The polypeptide is Phosphate import ATP-binding protein PstB (Synechococcus elongatus (strain ATCC 33912 / PCC 7942 / FACHB-805) (Anacystis nidulans R2)).